Consider the following 274-residue polypeptide: NAD kinase (274 aa).

The active-site Proton acceptor is the Asp-59. Residues 59-60, 133-134, Arg-144, Asp-163, 174-179, and Gln-233 contribute to the NAD(+) site; these read DG, ND, and TAYALS.

It belongs to the NAD kinase family. Requires a divalent metal cation as cofactor.

It localises to the cytoplasm. The catalysed reaction is NAD(+) + ATP = ADP + NADP(+) + H(+). In terms of biological role, involved in the regulation of the intracellular balance of NAD and NADP, and is a key enzyme in the biosynthesis of NADP. Catalyzes specifically the phosphorylation on 2'-hydroxyl of the adenosine moiety of NAD to yield NADP. In Aquifex aeolicus (strain VF5), this protein is NAD kinase.